The following is a 218-amino-acid chain: Adenylate kinase (218 aa).

10–15 (GAGKGT) provides a ligand contact to ATP. An NMP region spans residues 30–59 (STGDMLRAAVKAGTPLGIEAKKVMDAGGLM). AMP is bound by residues Thr-31, Arg-36, 57-59 (GLM), 85-88 (GYPR), and Gln-92. The LID stretch occupies residues 122–159 (GRWVHLASGRSYNTQSNPPKVAGQDDITGEALIQRDDD). Residues Arg-123 and 132-133 (SY) contribute to the ATP site. 2 residues coordinate AMP: Arg-156 and Arg-167. Gly-203 lines the ATP pocket.

This sequence belongs to the adenylate kinase family. As to quaternary structure, monomer.

The protein resides in the cytoplasm. It carries out the reaction AMP + ATP = 2 ADP. It participates in purine metabolism; AMP biosynthesis via salvage pathway; AMP from ADP: step 1/1. Catalyzes the reversible transfer of the terminal phosphate group between ATP and AMP. Plays an important role in cellular energy homeostasis and in adenine nucleotide metabolism. In Bordetella avium (strain 197N), this protein is Adenylate kinase.